The primary structure comprises 80 residues: MATWLAILLIIVALIGGLVGGFFLARKYMMDYLKKNPPINEEMLRMMMMQMGQKPSQKKINQMMTMMNKNMDQNMKSSKK.

The chain crosses the membrane as a helical span at residues 4 to 24 (WLAILLIIVALIGGLVGGFFL).

This sequence belongs to the UPF0154 family.

Its subcellular location is the membrane. This Staphylococcus haemolyticus (strain JCSC1435) protein is UPF0154 protein SH1564.